Consider the following 373-residue polypeptide: UDP-N-acetylglucosamine--N-acetylmuramyl-(pentapeptide) pyrophosphoryl-undecaprenol N-acetylglucosamine transferase (373 aa).

UDP-N-acetyl-alpha-D-glucosamine-binding positions include 13 to 15, Asn124, Arg165, Ser192, and Gln293; that span reads TGG.

Belongs to the glycosyltransferase 28 family. MurG subfamily.

Its subcellular location is the cell inner membrane. It catalyses the reaction di-trans,octa-cis-undecaprenyl diphospho-N-acetyl-alpha-D-muramoyl-L-alanyl-D-glutamyl-meso-2,6-diaminopimeloyl-D-alanyl-D-alanine + UDP-N-acetyl-alpha-D-glucosamine = di-trans,octa-cis-undecaprenyl diphospho-[N-acetyl-alpha-D-glucosaminyl-(1-&gt;4)]-N-acetyl-alpha-D-muramoyl-L-alanyl-D-glutamyl-meso-2,6-diaminopimeloyl-D-alanyl-D-alanine + UDP + H(+). It participates in cell wall biogenesis; peptidoglycan biosynthesis. Cell wall formation. Catalyzes the transfer of a GlcNAc subunit on undecaprenyl-pyrophosphoryl-MurNAc-pentapeptide (lipid intermediate I) to form undecaprenyl-pyrophosphoryl-MurNAc-(pentapeptide)GlcNAc (lipid intermediate II). The chain is UDP-N-acetylglucosamine--N-acetylmuramyl-(pentapeptide) pyrophosphoryl-undecaprenol N-acetylglucosamine transferase from Sinorhizobium fredii (strain NBRC 101917 / NGR234).